The following is a 116-amino-acid chain: Large ribosomal subunit protein bL20 (116 aa).

This sequence belongs to the bacterial ribosomal protein bL20 family.

Functionally, binds directly to 23S ribosomal RNA and is necessary for the in vitro assembly process of the 50S ribosomal subunit. It is not involved in the protein synthesizing functions of that subunit. This is Large ribosomal subunit protein bL20 from Bacteroides thetaiotaomicron (strain ATCC 29148 / DSM 2079 / JCM 5827 / CCUG 10774 / NCTC 10582 / VPI-5482 / E50).